Reading from the N-terminus, the 215-residue chain is MRRVLITGFEPFGGERINPSWEVVKQMNDLMMGGVRIVARQLPCAFGEALTALNTAIDDVQPVLVLAIGQAGGRADITIERVAINVDDARIPDNLGNQPVDQPIIQEGPAAYFTRLPIKAMVQGIREAGIPASVSQTAGTYVCNHVMYGLLHRLNQFNNEVKGGFIHIPYLPEQAVDHPGAPSMSAQSVLVALELAISIALQIEHDLHITGGPVH.

Catalysis depends on residues Glu-80, Cys-143, and His-167.

This sequence belongs to the peptidase C15 family. In terms of assembly, homotetramer.

It localises to the cytoplasm. The enzyme catalyses Release of an N-terminal pyroglutamyl group from a polypeptide, the second amino acid generally not being Pro.. Functionally, removes 5-oxoproline from various penultimate amino acid residues except L-proline. In Yersinia pseudotuberculosis serotype O:1b (strain IP 31758), this protein is Pyrrolidone-carboxylate peptidase.